The chain runs to 291 residues: Sulfotransferase 1A1 (291 aa).

Residue 44–49 (KSGTNW) participates in 3'-phosphoadenylyl sulfate binding. 102-104 (KTH) contacts substrate. His-104 (proton acceptor) is an active-site residue. Residues Arg-126, Ser-134, Tyr-189, 223–228 (TSFKKM), and 251–255 (FMRKG) each bind 3'-phosphoadenylyl sulfate. The residue at position 134 (Ser-134) is a Phosphoserine.

It belongs to the sulfotransferase 1 family. In terms of assembly, homodimer. As to expression, expressed in brain, colon, liver, and small intestine of mice colonized with B.ovatus and L.plantarum.

Its subcellular location is the cytoplasm. The catalysed reaction is a phenol + 3'-phosphoadenylyl sulfate = an aryl sulfate + adenosine 3',5'-bisphosphate + H(+). It carries out the reaction 17beta-estradiol + 3'-phosphoadenylyl sulfate = 17beta-estradiol 3-sulfate + adenosine 3',5'-bisphosphate + H(+). The enzyme catalyses 4-ethylphenol + 3'-phosphoadenylyl sulfate = 4-ethylphenyl sulfate + adenosine 3',5'-bisphosphate + H(+). It catalyses the reaction 4-nitrophenol + 3'-phosphoadenylyl sulfate = 4-nitrophenyl sulfate + adenosine 3',5'-bisphosphate. The catalysed reaction is dopamine + 3'-phosphoadenylyl sulfate = dopamine 3-O-sulfate + adenosine 3',5'-bisphosphate + H(+). It carries out the reaction dopamine + 3'-phosphoadenylyl sulfate = dopamine 4-O-sulfate + adenosine 3',5'-bisphosphate + H(+). The enzyme catalyses 3,3',5-triiodo-L-thyronine + 3'-phosphoadenylyl sulfate = 3,3',5-triiodo-L-thyronine sulfate + adenosine 3',5'-bisphosphate + H(+). It catalyses the reaction 3,3',5'-triiodo-L-thyronine + 3'-phosphoadenylyl sulfate = 3,3',5'-triiodo-L-thyronine sulfate + adenosine 3',5'-bisphosphate + H(+). The catalysed reaction is 3,3'-diiodo-L-thyronine + 3'-phosphoadenylyl sulfate = 3,3'-diiodo-L-thyronine sulfate + adenosine 3',5'-bisphosphate + H(+). It carries out the reaction L-thyroxine + 3'-phosphoadenylyl sulfate = L-thyroxine sulfate + adenosine 3',5'-bisphosphate + H(+). In terms of biological role, sulfotransferase that utilizes 3'-phospho-5'-adenylyl sulfate (PAPS) as sulfonate donor to catalyze the sulfate conjugation of a wide variety of acceptor molecules bearing a hydroxyl or an amine group. Sulfonation increases the water solubility of most compounds, and therefore their renal excretion, but it can also result in bioactivation to form active metabolites. Displays broad substrate specificity for small phenolic compounds. Plays an important role in the sulfonation of endogenous molecules such as steroid hormones. Mediates also the metabolic activation of carcinogenic N-hydroxyarylamines leading to highly reactive intermediates capable of forming DNA adducts, potentially resulting in mutagenesis. May play a role in gut microbiota-host metabolic interaction. O-sulfonates 4-ethylphenol (4-EP), a dietary tyrosine-derived metabolite produced by gut bacteria. The product 4-EPS crosses the blood-brain barrier and may negatively regulate oligodendrocyte maturation and myelination, affecting the functional connectivity of different brain regions associated with the limbic system. Catalyzes the sulfate conjugation of dopamine. Catalyzes the sulfation of T4 (L-thyroxine/3,5,3',5'-tetraiodothyronine), T3 (3,5,3'-triiodothyronine), rT3 (3,3',5'-triiodothyronine) and 3,3'-T2 (3,3'-diiodothyronine), with a substrate preference of 3,3'-T2 &gt; rT3 &gt; T3 &gt; T4. The chain is Sulfotransferase 1A1 (Sult1a1) from Mus musculus (Mouse).